The following is a 473-amino-acid chain: ATP synthase subunit beta (473 aa).

153–160 (GGAGVGKT) contacts ATP.

This sequence belongs to the ATPase alpha/beta chains family. As to quaternary structure, F-type ATPases have 2 components, CF(1) - the catalytic core - and CF(0) - the membrane proton channel. CF(1) has five subunits: alpha(3), beta(3), gamma(1), delta(1), epsilon(1). CF(0) has three main subunits: a(1), b(2) and c(9-12). The alpha and beta chains form an alternating ring which encloses part of the gamma chain. CF(1) is attached to CF(0) by a central stalk formed by the gamma and epsilon chains, while a peripheral stalk is formed by the delta and b chains.

It localises to the cell membrane. It catalyses the reaction ATP + H2O + 4 H(+)(in) = ADP + phosphate + 5 H(+)(out). Functionally, produces ATP from ADP in the presence of a proton gradient across the membrane. The catalytic sites are hosted primarily by the beta subunits. The sequence is that of ATP synthase subunit beta from Rickettsia africae (strain ESF-5).